The sequence spans 699 residues: Cyclic AMP-dependent transcription factor ATF-6 beta (699 aa).

Ala2 bears the N-acetylalanine mark. At 2–393 the chain is on the cytoplasmic side; that stretch reads AELMLLSEIA…GLKLGSGNRK (392 aa). Disordered stretches follow at residues 59 to 114, 218 to 246, and 290 to 313; these read SLDV…QVPG, VQISMGPSPDSSSGKAPATRKPPLQPKPV, and EGPAPAAPRPERKSIVPAPMPGNS. Residues 68-78 show a composition bias toward pro residues; that stretch reads PPEPPWDPLPI. The segment covering 86–109 has biased composition (low complexity); sequence SEPSSPCSSSSLSSESSHLSTEPP. Residues 322–385 enclose the bZIP domain; it reads LLKRQQRMIK…EALLAENSGL (64 aa). A basic motif region spans residues 324–344; it reads KRQQRMIKNRESACQSRRKKK. The interval 347–354 is leucine-zipper; sequence LQGLEARL. The helical; Signal-anchor for type II membrane protein transmembrane segment at 394–414 threads the bilayer; the sequence is VVCIMVFLLFIAFNFGPVSIS. Residues 415-699 lie on the Lumenal side of the membrane; that stretch reads EPPPAPMSPR…ASQPLYLNHP (285 aa). Residues 417–474 form a disordered region; sequence PPAPMSPRMSREEPRPQRHLLGFSEPGPAHGMEPLREAAQSPGEQQPSSAGRPSFRNL. The segment covering 458-467 has biased composition (polar residues); the sequence is PGEQQPSSAG. Asn473 and Asn502 each carry an N-linked (GlcNAc...) asparagine glycan. The segment covering 519–529 has biased composition (basic residues); it reads RHQRGRRKIPH. The segment at 519–563 is disordered; it reads RHQRGRRKIPHRAQERQKSQLRKKSPPVKPVPTQPPGPPERDPVG. A compositionally biased stretch (pro residues) spans 545-556; it reads PVKPVPTQPPGP. 3 N-linked (GlcNAc...) asparagine glycosylation sites follow: Asn607, Asn624, and Asn673. Positions 657–699 are disordered; it reads STVPPSLRKQPSPSPGNTTGGPLPGSAASPAHQASQPLYLNHP. Residues 680 to 693 are compositionally biased toward low complexity; sequence PGSAASPAHQASQP.

The protein belongs to the bZIP family. ATF subfamily. Homodimer and heterodimer with ATF6-alpha. The dimer interacts with the nuclear transcription factor Y (NF-Y) trimer through direct binding to NF-Y subunit C (NF-YC). N-glycosylated. In terms of processing, during unfolded protein response, a fragment of approximately 60 kDa containing the cytoplasmic transcription factor domain is released by proteolysis. The cleavage is probably performed sequentially by site-1 (MBTPS1, S1P) and site-2 (MBTPS2, S2P) proteases.

Its subcellular location is the endoplasmic reticulum membrane. It localises to the nucleus. Its function is as follows. Precursor of the transcription factor form (Processed cyclic AMP-dependent transcription factor ATF-6 beta), which is embedded in the endoplasmic reticulum membrane. Endoplasmic reticulum stress promotes processing of this form, releasing the transcription factor form that translocates into the nucleus, where it activates transcription of genes involved in the unfolded protein response (UPR). Transcription factor that acts in the unfolded protein response (UPR) pathway by activating UPR target genes induced during ER stress. Binds DNA on the 5'-CCAC[GA]-3' half of the ER stress response element (ERSE) (5'-CCAATN(9)CCAC[GA]-3') when NF-Y is bound to ERSE. This is Cyclic AMP-dependent transcription factor ATF-6 beta (Atf6b) from Mus musculus (Mouse).